A 735-amino-acid chain; its full sequence is 2-5A-dependent ribonuclease (735 aa).

Residues 1–21 (METPDYNTPQGGTPSAGSQRT) form a disordered region. ANK repeat units lie at residues 24-53 (EDDS…DANA), 58-87 (WGWT…DPHR), 91-120 (NGAT…DVNE), 124-153 (NGFT…NVNL), 167-197 (GGAT…EVDA), 201-234 (MGRN…DVNV), 238-268 (RGKT…NIDA), 272-301 (EGKT…DKCD), and 303-328 (LVWI…NPDT). The tract at residues 26–51 (DSSLIKAVQKGDVVRVQQLLEKGADA) is binding to TMEV Leader protein. 2 2-5A binding (P-loop) regions span residues 229 to 242 (GADV…GKTP) and 253 to 275 (GLVQ…EGKT). In terms of domain architecture, Protein kinase spans 364–584 (IHDDYKIAGT…LVDLLGHPFF (221 aa)). A C6-type zinc finger spans residues 401–436 (CKEVSCLRDCGDHSNLVAFYGREDDKGCLYVCVSLC). The KEN domain maps to 587–722 (WENRYRTLRN…KHFPQPPPRL (136 aa)). The tract at residues 714 to 735 (HFPQPPPRLSVPEAVGPGGIQS) is disordered.

This sequence belongs to the protein kinase superfamily. In terms of assembly, (Microbial infection) Interacts (via N-terminus) with TMEV leader protein; this interaction prevents RNASEL activation by its substrate 2'-5' oligoadenylates. As to quaternary structure, monomer (inactive form) or homodimer. Interacts with ABCE1; this interaction inhibits the RNASEL. Mn(2+) serves as cofactor. It depends on Mg(2+) as a cofactor. Expressed in spleen, thymus, lung, testis, kidney, liver and heart.

The protein resides in the cytoplasm. The protein localises to the mitochondrion. After binding to 2-5A (5'-phosphorylated 2',5'-linked oligoadenylates) the homodimerization and subsequent activation occurs. Inhibited by RNASEL inhibitor ABCE1/RLI, a cytoplasmic member of the ATP-binding cassette (ABC) transporter family. Its function is as follows. Endoribonuclease that functions in the interferon (IFN) antiviral response. In INF treated and virus infected cells, RNASEL probably mediates its antiviral effects through a combination of direct cleavage of single-stranded viral RNAs, inhibition of protein synthesis through the degradation of rRNA, induction of apoptosis, and induction of other antiviral genes. RNASEL mediated apoptosis is the result of a JNK-dependent stress-response pathway leading to cytochrome c release from mitochondria and caspase-dependent apoptosis. Therefore, activation of RNASEL could lead to elimination of virus infected cells under some circumstances. In the crosstalk between autophagy and apoptosis proposed to induce autophagy as an early stress response to small double-stranded RNA and at later stages of prolonged stress to activate caspase-dependent proteolytic cleavage of BECN1 to terminate autophagy and promote apoptosis. Might play a central role in the regulation of mRNA turnover. Cleaves 3' of UpNp dimers, with preference for UU and UA sequences, to sets of discrete products ranging from between 4 and 22 nucleotides in length. The protein is 2-5A-dependent ribonuclease (Rnasel) of Mus musculus (Mouse).